Here is a 318-residue protein sequence, read N- to C-terminus: 4-hydroxy-3-methylbut-2-enyl diphosphate reductase (318 aa).

Residue cysteine 12 participates in [4Fe-4S] cluster binding. (2E)-4-hydroxy-3-methylbut-2-enyl diphosphate contacts are provided by histidine 41 and histidine 74. Dimethylallyl diphosphate is bound by residues histidine 41 and histidine 74. Positions 41 and 74 each coordinate isopentenyl diphosphate. [4Fe-4S] cluster is bound at residue cysteine 96. Histidine 124 lines the (2E)-4-hydroxy-3-methylbut-2-enyl diphosphate pocket. Position 124 (histidine 124) interacts with dimethylallyl diphosphate. Histidine 124 contributes to the isopentenyl diphosphate binding site. Glutamate 126 functions as the Proton donor in the catalytic mechanism. Residue threonine 167 participates in (2E)-4-hydroxy-3-methylbut-2-enyl diphosphate binding. [4Fe-4S] cluster is bound at residue cysteine 197. (2E)-4-hydroxy-3-methylbut-2-enyl diphosphate-binding residues include serine 225, serine 226, asparagine 227, and serine 269. Residues serine 225, serine 226, asparagine 227, and serine 269 each contribute to the dimethylallyl diphosphate site. Residues serine 225, serine 226, asparagine 227, and serine 269 each contribute to the isopentenyl diphosphate site.

This sequence belongs to the IspH family. The cofactor is [4Fe-4S] cluster.

It carries out the reaction isopentenyl diphosphate + 2 oxidized [2Fe-2S]-[ferredoxin] + H2O = (2E)-4-hydroxy-3-methylbut-2-enyl diphosphate + 2 reduced [2Fe-2S]-[ferredoxin] + 2 H(+). It catalyses the reaction dimethylallyl diphosphate + 2 oxidized [2Fe-2S]-[ferredoxin] + H2O = (2E)-4-hydroxy-3-methylbut-2-enyl diphosphate + 2 reduced [2Fe-2S]-[ferredoxin] + 2 H(+). Its pathway is isoprenoid biosynthesis; dimethylallyl diphosphate biosynthesis; dimethylallyl diphosphate from (2E)-4-hydroxy-3-methylbutenyl diphosphate: step 1/1. It functions in the pathway isoprenoid biosynthesis; isopentenyl diphosphate biosynthesis via DXP pathway; isopentenyl diphosphate from 1-deoxy-D-xylulose 5-phosphate: step 6/6. Its function is as follows. Catalyzes the conversion of 1-hydroxy-2-methyl-2-(E)-butenyl 4-diphosphate (HMBPP) into a mixture of isopentenyl diphosphate (IPP) and dimethylallyl diphosphate (DMAPP). Acts in the terminal step of the DOXP/MEP pathway for isoprenoid precursor biosynthesis. This is 4-hydroxy-3-methylbut-2-enyl diphosphate reductase from Francisella philomiragia subsp. philomiragia (strain ATCC 25017 / CCUG 19701 / FSC 153 / O#319-036).